The sequence spans 153 residues: 6,7-dimethyl-8-ribityllumazine synthase (153 aa).

5-amino-6-(D-ribitylamino)uracil is bound by residues F21, 55-57 (AFE), and 79-81 (TVI). 84–85 (AT) contacts (2S)-2-hydroxy-3-oxobutyl phosphate. Residue H87 is the Proton donor of the active site. F112 is a binding site for 5-amino-6-(D-ribitylamino)uracil. Residue R126 coordinates (2S)-2-hydroxy-3-oxobutyl phosphate.

The protein belongs to the DMRL synthase family. Forms an icosahedral capsid composed of 60 subunits, arranged as a dodecamer of pentamers.

It catalyses the reaction (2S)-2-hydroxy-3-oxobutyl phosphate + 5-amino-6-(D-ribitylamino)uracil = 6,7-dimethyl-8-(1-D-ribityl)lumazine + phosphate + 2 H2O + H(+). The protein operates within cofactor biosynthesis; riboflavin biosynthesis; riboflavin from 2-hydroxy-3-oxobutyl phosphate and 5-amino-6-(D-ribitylamino)uracil: step 1/2. In terms of biological role, catalyzes the formation of 6,7-dimethyl-8-ribityllumazine by condensation of 5-amino-6-(D-ribitylamino)uracil with 3,4-dihydroxy-2-butanone 4-phosphate. This is the penultimate step in the biosynthesis of riboflavin. This chain is 6,7-dimethyl-8-ribityllumazine synthase, found in Bacillus anthracis (strain A0248).